Reading from the N-terminus, the 195-residue chain is Imidazoleglycerol-phosphate dehydratase (195 aa).

Belongs to the imidazoleglycerol-phosphate dehydratase family.

The protein resides in the cytoplasm. It carries out the reaction D-erythro-1-(imidazol-4-yl)glycerol 3-phosphate = 3-(imidazol-4-yl)-2-oxopropyl phosphate + H2O. It participates in amino-acid biosynthesis; L-histidine biosynthesis; L-histidine from 5-phospho-alpha-D-ribose 1-diphosphate: step 6/9. The polypeptide is Imidazoleglycerol-phosphate dehydratase (Burkholderia pseudomallei (strain 1710b)).